Consider the following 156-residue polypeptide: Dihydrofolate reductase (156 aa).

A DHFR domain is found at 1–156 (MLKLIWCQTL…VNYYSNKKEK (156 aa)).

Belongs to the dihydrofolate reductase family.

It catalyses the reaction (6S)-5,6,7,8-tetrahydrofolate + NADP(+) = 7,8-dihydrofolate + NADPH + H(+). It participates in cofactor biosynthesis; tetrahydrofolate biosynthesis; 5,6,7,8-tetrahydrofolate from 7,8-dihydrofolate: step 1/1. Functionally, key enzyme in folate metabolism. Catalyzes an essential reaction for de novo glycine and purine synthesis, and for DNA precursor synthesis. The chain is Dihydrofolate reductase (folA) from Ureaplasma parvum serovar 3 (strain ATCC 700970).